A 226-amino-acid polypeptide reads, in one-letter code: Exopolysaccharide production protein ExoY (226 aa).

A helical transmembrane segment spans residues 34 to 54 (VLAASVALLLFSPLFLLIMAL).

The protein belongs to the bacterial sugar transferase family.

It localises to the cell membrane. It functions in the pathway glycan metabolism; exopolysaccharide biosynthesis. Needed for the addition of the first sugar (galactose) to the isoprenoid carrier. May function as a sugar transferase. This is Exopolysaccharide production protein ExoY (exoY) from Rhizobium meliloti (strain 1021) (Ensifer meliloti).